The sequence spans 73 residues: uncharacterized protein (73 aa).

Residues 37–57 (AIIITVAVVAFGALTLGAIGA) traverse the membrane as a helical segment.

Its subcellular location is the membrane. This is an uncharacterized protein from Natronomonas pharaonis (strain ATCC 35678 / DSM 2160 / CIP 103997 / JCM 8858 / NBRC 14720 / NCIMB 2260 / Gabara) (Halobacterium pharaonis).